Here is a 145-residue protein sequence, read N- to C-terminus: 3-hydroxyacyl-[acyl-carrier-protein] dehydratase FabZ (145 aa).

Residue histidine 47 is part of the active site.

The protein belongs to the thioester dehydratase family. FabZ subfamily.

It is found in the cytoplasm. The catalysed reaction is a (3R)-hydroxyacyl-[ACP] = a (2E)-enoyl-[ACP] + H2O. In terms of biological role, involved in unsaturated fatty acids biosynthesis. Catalyzes the dehydration of short chain beta-hydroxyacyl-ACPs and long chain saturated and unsaturated beta-hydroxyacyl-ACPs. This chain is 3-hydroxyacyl-[acyl-carrier-protein] dehydratase FabZ, found in Polaromonas sp. (strain JS666 / ATCC BAA-500).